A 305-amino-acid chain; its full sequence is Nitrogen assimilation regulatory protein nac (305 aa).

The region spanning 1–58 (MNLRRLKYFVKIVDIGSLTQAAEVLHIAQPALSQQVATLEGEMDQQLLIRTKRGVTPT) is the HTH lysR-type domain. Residues 18-37 (LTQAAEVLHIAQPALSQQVA) constitute a DNA-binding region (H-T-H motif).

This sequence belongs to the LysR transcriptional regulatory family.

Transcriptional activator for the hut, put and ure operons and repressor for the gdh and gltB operons in response to nitrogen limitation. Negative regulator of its own expression. This Klebsiella aerogenes (Enterobacter aerogenes) protein is Nitrogen assimilation regulatory protein nac (nac).